Consider the following 574-residue polypeptide: 2-succinyl-5-enolpyruvyl-6-hydroxy-3-cyclohexene-1-carboxylate synthase (574 aa).

The protein belongs to the TPP enzyme family. MenD subfamily. In terms of assembly, homodimer. The cofactor is Mg(2+). It depends on Mn(2+) as a cofactor. Thiamine diphosphate is required as a cofactor.

The catalysed reaction is isochorismate + 2-oxoglutarate + H(+) = 5-enolpyruvoyl-6-hydroxy-2-succinyl-cyclohex-3-ene-1-carboxylate + CO2. It participates in quinol/quinone metabolism; 1,4-dihydroxy-2-naphthoate biosynthesis; 1,4-dihydroxy-2-naphthoate from chorismate: step 2/7. It functions in the pathway cofactor biosynthesis; phylloquinone biosynthesis. In terms of biological role, catalyzes the thiamine diphosphate-dependent decarboxylation of 2-oxoglutarate and the subsequent addition of the resulting succinic semialdehyde-thiamine pyrophosphate anion to isochorismate to yield 2-succinyl-5-enolpyruvyl-6-hydroxy-3-cyclohexene-1-carboxylate (SEPHCHC). The protein is 2-succinyl-5-enolpyruvyl-6-hydroxy-3-cyclohexene-1-carboxylate synthase of Synechococcus sp. (strain RCC307).